The primary structure comprises 148 residues: Small ribosomal subunit protein eS12B (148 aa).

The protein belongs to the eukaryotic ribosomal protein eS12 family. In terms of assembly, component of the small ribosomal subunit (SSU). Mature yeast ribosomes consist of a small (40S) and a large (60S) subunit. The 40S small subunit contains 1 molecule of ribosomal RNA (18S rRNA) and at least 33 different proteins. The large 60S subunit contains 3 rRNA molecules (25S, 5.8S and 5S rRNA) and at least 46 different proteins.

The protein resides in the cytoplasm. Functionally, component of the ribosome, a large ribonucleoprotein complex responsible for the synthesis of proteins in the cell. The small ribosomal subunit (SSU) binds messenger RNAs (mRNAs) and translates the encoded message by selecting cognate aminoacyl-transfer RNA (tRNA) molecules. The large subunit (LSU) contains the ribosomal catalytic site termed the peptidyl transferase center (PTC), which catalyzes the formation of peptide bonds, thereby polymerizing the amino acids delivered by tRNAs into a polypeptide chain. The nascent polypeptides leave the ribosome through a tunnel in the LSU and interact with protein factors that function in enzymatic processing, targeting, and the membrane insertion of nascent chains at the exit of the ribosomal tunnel. This chain is Small ribosomal subunit protein eS12B (rps1202), found in Schizosaccharomyces pombe (strain 972 / ATCC 24843) (Fission yeast).